A 639-amino-acid polypeptide reads, in one-letter code: 3-oxocholoyl-CoA 4-desaturase (639 aa).

Residue Q101 coordinates FMN. Residue H155–H158 participates in substrate binding. Y160 (proton donor) is an active-site residue. Residues R208, R286, and G308 to R309 contribute to the FMN site. [4Fe-4S] cluster is bound by residues C332 and C335. Q337 contributes to the FAD binding site. Residues C339 and C353 each coordinate [4Fe-4S] cluster. 5 residues coordinate FAD: A383, E402, Q410, K420, and V447.

This sequence in the N-terminal section; belongs to the NADH:flavin oxidoreductase/NADH oxidase family. It depends on FMN as a cofactor. The cofactor is FAD. Requires [4Fe-4S] cluster as cofactor.

The catalysed reaction is 7alpha,12alpha-dihydroxy-3-oxochol-24-oyl-CoA + NAD(+) = 7alpha,12alpha-dihydroxy-3-oxochol-4-en-24-oyl-CoA + NADH + H(+). It carries out the reaction 7alpha-hydroxy-3-oxochol-24-oyl-CoA + NAD(+) = 7alpha-hydroxy-3-oxochol-4-en-24-oyl-CoA + NADH + H(+). The protein operates within lipid metabolism; bile acid degradation. Its function is as follows. Stereo-specific NAD(H)-dependent 3-oxo-delta4-cholenoic acid oxidoreductase involved in bile acid 7alpha-dehydroxylation. The protein is 3-oxocholoyl-CoA 4-desaturase of Clostridium scindens (strain JCM 10418 / VPI 12708).